We begin with the raw amino-acid sequence, 251 residues long: Leucine-rich repeat and calponin homology domain-containing protein 1 (251 aa).

Residues 73–97 (SNGSEYSPNEIRANSPAISPTANST) form a disordered region. Phosphoserine is present on residues Ser87 and Ser91. A compositionally biased stretch (polar residues) spans 88–97 (PAISPTANST). Thr123 is subject to Phosphothreonine. Residues 131–244 (MREEKELVEH…ITVQALLDVT (114 aa)) form the Calponin-homology (CH) domain.

Interacts (via LRR repeats) with unphosphorylated DOCK8 (via DHR-2 domain); the interaction prevents the interaction between DOCK8 and CDC42.

It localises to the cytoplasm. In terms of biological role, acts as a negative regulator of GTPase CDC42 by sequestering CDC42-guanine exchange factor DOCK8. Probably by preventing CDC42 activation, negatively regulates CD4(+) T-cell migration. This is Leucine-rich repeat and calponin homology domain-containing protein 1 from Felis catus (Cat).